A 20-amino-acid chain; its full sequence is Protein YfiS (20 aa).

This chain is Protein YfiS, found in Escherichia coli (strain K12).